The sequence spans 50 residues: Large ribosomal subunit protein bL33B (50 aa).

The protein belongs to the bacterial ribosomal protein bL33 family.

This Metamycoplasma arthritidis (strain 158L3-1) (Mycoplasma arthritidis) protein is Large ribosomal subunit protein bL33B.